A 162-amino-acid chain; its full sequence is Non-specific lipid transfer protein GPI-anchored 27 (162 aa).

The first 29 residues, 1–29, serve as a signal peptide directing secretion; that stretch reads MAYTNKVAVAVGAAVVFLAVVMNPRWTEA. 4 cysteine pairs are disulfide-bonded: Cys39–Cys78, Cys50–Cys62, Cys63–Cys102, and Cys76–Cys110. N-linked (GlcNAc...) asparagine glycosylation occurs at Asn68. Asn124 and Asn135 each carry an N-linked (GlcNAc...) asparagine glycan. The GPI-anchor amidated serine moiety is linked to residue Ser137. The propeptide at 138–162 is removed in mature form; that stretch reads VGGKNKVATSMSAFGLVAILLFVMF.

The protein belongs to the plant LTP family.

It localises to the cell membrane. Its function is as follows. Probable lipid transfer protein. The protein is Non-specific lipid transfer protein GPI-anchored 27 of Arabidopsis thaliana (Mouse-ear cress).